Consider the following 881-residue polypeptide: Probable alpha/beta-glucosidase agdC (881 aa).

Residues 1–14 (MLRSLLLLAPLVGA) form the signal peptide. N-linked (GlcNAc...) asparagine glycans are attached at residues N171, N293, and N373. The active-site Nucleophile is D422. The active site involves E425. The interval 440–485 (YSRDNDLPPAAPPVRPSNPRPLPGFPGDFQPSSSSKRSTKGSKVGL) is disordered. Pro residues predominate over residues 448–463 (PAAPPVRPSNPRPLPG). N-linked (GlcNAc...) asparagine glycosylation occurs at N506. Residue D571 is the Proton donor of the active site. N-linked (GlcNAc...) asparagine glycans are attached at residues N572, N608, and N742.

It belongs to the glycosyl hydrolase 31 family.

The protein localises to the secreted. It carries out the reaction Hydrolysis of terminal, non-reducing (1-&gt;4)-linked alpha-D-glucose residues with release of alpha-D-glucose.. It catalyses the reaction Hydrolysis of terminal, non-reducing beta-D-glucosyl residues with release of beta-D-glucose.. Functionally, glucosidase involved in the degradation of cellulosic biomass. Has both alpha- and beta-glucosidase activity. This chain is Probable alpha/beta-glucosidase agdC (agdC), found in Neosartorya fischeri (strain ATCC 1020 / DSM 3700 / CBS 544.65 / FGSC A1164 / JCM 1740 / NRRL 181 / WB 181) (Aspergillus fischerianus).